Consider the following 218-residue polypeptide: ATP phosphoribosyltransferase (218 aa).

Belongs to the ATP phosphoribosyltransferase family. Short subfamily. In terms of assembly, heteromultimer composed of HisG and HisZ subunits.

It is found in the cytoplasm. The enzyme catalyses 1-(5-phospho-beta-D-ribosyl)-ATP + diphosphate = 5-phospho-alpha-D-ribose 1-diphosphate + ATP. It participates in amino-acid biosynthesis; L-histidine biosynthesis; L-histidine from 5-phospho-alpha-D-ribose 1-diphosphate: step 1/9. Catalyzes the condensation of ATP and 5-phosphoribose 1-diphosphate to form N'-(5'-phosphoribosyl)-ATP (PR-ATP). Has a crucial role in the pathway because the rate of histidine biosynthesis seems to be controlled primarily by regulation of HisG enzymatic activity. The chain is ATP phosphoribosyltransferase (hisG) from Deinococcus radiodurans (strain ATCC 13939 / DSM 20539 / JCM 16871 / CCUG 27074 / LMG 4051 / NBRC 15346 / NCIMB 9279 / VKM B-1422 / R1).